Here is a 1116-residue protein sequence, read N- to C-terminus: Anillin (1116 aa).

Composition is skewed to basic and acidic residues over residues 1 to 25 (MDPF…KMAD) and 85 to 94 (KQPKTPELPK). Disordered stretches follow at residues 1 to 188 (MDPF…PVGR), 205 to 257 (DLSH…PKDT), 304 to 363 (KPNE…KVAT), and 443 to 522 (NVWT…PRLV). Over residues 101-119 (ASHQQLRATNQTPQVSLLS) the composition is skewed to polar residues. The segment covering 120 to 133 (SDKELTASDVKDAS) has biased composition (basic and acidic residues). Positions 142–254 (LADQRRYWDN…QDTTSCSQRP (113 aa)) are interactions with myh9 and myh10. Low complexity predominate over residues 226–242 (SKESTTSSASASMNSHS). The interval 255-418 (KDTTVNKAVC…LKQNDISSTA (164 aa)) is interaction with F-actin. 2 stretches are compositionally biased toward polar residues: residues 304-326 (KPNE…SSPQ) and 336-356 (YSYQ…VQTQ). A coiled-coil region spans residues 416–443 (STASLAQQQKKEREKELAALRGRYDRRN). Residues 453–472 (QGTFPETSSNLPTSDVASCS) are compositionally biased toward polar residues. The 125-residue stretch at 975–1099 (SVEDKGFLTM…WMQKLNQFLV (125 aa)) folds into the PH domain.

As to quaternary structure, interacts with and bundles F-actin. Interacts with the non-muscle myosin II heavy chains myh9 and myh10, and these interactions may be enhanced by the phosphorylation of myosin II regulatory light chain by mylk.

Its subcellular location is the nucleus. The protein localises to the cytoplasm. The protein resides in the cytoskeleton. It localises to the cell cortex. It is found in the cell projection. Its subcellular location is the bleb. Functionally, required for cytokinesis. Essential for the structural integrity of the cleavage furrow and for completion of cleavage furrow ingression. Plays a role in bleb assembly during metaphase and anaphase of mitosis. May play a significant role in podocyte cell migration. This is Anillin (anln) from Xenopus laevis (African clawed frog).